A 1372-amino-acid polypeptide reads, in one-letter code: Collagen alpha-2(I) chain (1372 aa).

An N-terminal signal peptide occupies residues 1–22 (MLSFVDTRTLLLLAVTSCLATC). Glutamine 23 is subject to Pyrrolidone carboxylic acid. Residues 23–85 (QYLQSGSVRK…PPGLTGNFAA (63 aa)) constitute a propeptide, N-terminal propeptide. The interval 28 to 1135 (GSVRKGPTGD…DQPRSQPSLR (1108 aa)) is disordered. Positions 59 to 77 (MGPPGPPGSPGPPGSPAPP) are enriched in pro residues. Residue lysine 90 is modified to Allysine. Low complexity predominate over residues 95–146 (GPGPMGLMGPRGPPGAVGAPGPQGFQGPAGEPGEPGQTGPAGPRGPAGSPGK). Residues 147-161 (AGEDGHPGKPGRPGE) show a composition bias toward basic and acidic residues. At lysine 183 the chain carries 5-hydroxylysine; alternate. A glycan (O-linked (Gal...) hydroxylysine; alternate) is linked at lysine 183. Low complexity-rich tracts occupy residues 231-260 (VGAPGPAGARGSDGSVGPVGPAGPIGSAGP), 285-299 (AGPRGEVGLPGLSGP), 306-327 (PGTNGLTGAKGATGLPGVAGAP), 336-351 (PGPAGAAGATGARGLV), 390-416 (PGEAGSAGPAGPPGLRGSPGSRGLPGA), 476-495 (LPGIDGRPGPIGPAGPRGEA), and 519-537 (PGLAGARGAPGPDGNNGAQ). The segment covering 544 to 553 (GVQGGKGEQG) has biased composition (gly residues). Over residues 600–639 (PGESGAAGPSGPIGSRGPSGAPGPDGNKGEAGAVGAPGSA) the composition is skewed to low complexity. Residues 640–649 (GASGPGGLPG) are compositionally biased toward gly residues. 2 stretches are compositionally biased toward low complexity: residues 681–716 (RGIPGAVGAPGPAGASGDRGEAGAAGPSGPAGPRGS) and 725–743 (PAGPNGFAGPAGAAGQPGA). Positions 744–753 (KGEKGTKGPK) are enriched in basic and acidic residues. Positions 755-771 (ENGIVGPTGSVGAAGPS) are enriched in low complexity. A compositionally biased stretch (gly residues) spans 781 to 790 (GSRGDGGPPG). Low complexity-rich tracts occupy residues 792 to 801 (TGFPGAAGRT), 855 to 882 (SGEPGTAGAPGTAGPQGLLGAPGILGLP), 905 to 927 (ISGPPGARGPPGAVGSPGVNGAP), 957 to 978 (PGSIGPTGAAGAPGPHGSVGPA), and 987 to 1007 (PGPAGSVGPVGAVGPRGPSGP). The segment covering 1011–1022 (RGDKGEPGDKGH) has biased composition (basic and acidic residues). The segment covering 1095–1107 (AGPPGPPGPPGPP) has biased composition (pro residues). Residues 1126 to 1372 (DQPRSQPSLR…RVEVGPVCFK (247 aa)) constitute a propeptide, C-terminal propeptide. Positions 1139 to 1372 (YEVDATLKSL…RVEVGPVCFK (234 aa)) constitute a Fibrillar collagen NC1 domain. 3 disulfide bridges follow: cysteine 1169/cysteine 1201, cysteine 1209/cysteine 1370, and cysteine 1278/cysteine 1323. 5 residues coordinate Ca(2+): aspartate 1187, asparagine 1189, glutamine 1190, cysteine 1192, and aspartate 1195. Asparagine 1273 carries an N-linked (GlcNAc...) asparagine glycan.

This sequence belongs to the fibrillar collagen family. Trimers of one alpha 2(I) and two alpha 1(I) chains. Interacts (via C-terminus) with TMEM131 (via PapD-L domain); the interaction is direct and is involved in assembly and TRAPPIII ER-to-Golgi transport complex-dependent secretion of collagen. Post-translationally, prolines at the third position of the tripeptide repeating unit (G-X-Y) are hydroxylated in some or all of the chains. In terms of tissue distribution, expressed in kidney glomeruli.

It is found in the secreted. It localises to the extracellular space. The protein localises to the extracellular matrix. Functionally, type I collagen is a member of group I collagen (fibrillar forming collagen). The sequence is that of Collagen alpha-2(I) chain (Col1a2) from Mus musculus (Mouse).